The primary structure comprises 194 residues: Putative manganese efflux pump MntP (194 aa).

The next 6 helical transmembrane spans lie at 2-22 (ISII…AFAV), 43-63 (LWFG…ASTF), 67-87 (VTQF…GNMV), 111-131 (PLAV…AFMF), 137-157 (AFAI…GLHI), and 174-194 (GVVL…VIAF).

This sequence belongs to the MntP (TC 9.B.29) family.

The protein localises to the cell membrane. Its function is as follows. Probably functions as a manganese efflux pump. This is Putative manganese efflux pump MntP from Bifidobacterium longum (strain DJO10A).